The primary structure comprises 276 residues: Exosome complex component Rrp42 (276 aa).

Belongs to the RNase PH family. Rrp42 subfamily. Component of the archaeal exosome complex. Forms a hexameric ring-like arrangement composed of 3 Rrp41-Rrp42 heterodimers. The hexameric ring associates with a trimer of Rrp4 and/or Csl4 subunits.

The protein localises to the cytoplasm. In terms of biological role, non-catalytic component of the exosome, which is a complex involved in RNA degradation. Contributes to the structuring of the Rrp41 active site. The polypeptide is Exosome complex component Rrp42 (Aeropyrum pernix (strain ATCC 700893 / DSM 11879 / JCM 9820 / NBRC 100138 / K1)).